A 364-amino-acid chain; its full sequence is sn-glycerol-3-phosphate import ATP-binding protein UgpC (364 aa).

The region spanning 4 to 235 (VVLRNVRKTY…PATTFVASFI (232 aa)) is the ABC transporter domain. 37–44 (GPSGCGKS) provides a ligand contact to ATP.

This sequence belongs to the ABC transporter superfamily. sn-glycerol-3-phosphate importer (TC 3.A.1.1.3) family. In terms of assembly, the complex is composed of two ATP-binding proteins (UgpC), two transmembrane proteins (UgpA and UgpE) and a solute-binding protein (UgpB).

It localises to the cell inner membrane. The enzyme catalyses sn-glycerol 3-phosphate(out) + ATP + H2O = sn-glycerol 3-phosphate(in) + ADP + phosphate + H(+). In terms of biological role, part of the ABC transporter complex UgpBAEC involved in sn-glycerol-3-phosphate (G3P) import. Responsible for energy coupling to the transport system. This is sn-glycerol-3-phosphate import ATP-binding protein UgpC from Rhodopseudomonas palustris (strain HaA2).